The chain runs to 80 residues: DinI-like protein Z2083/ECs2153 (80 aa).

The polypeptide is DinI-like protein Z2083/ECs2153 (Escherichia coli O157:H7).